We begin with the raw amino-acid sequence, 569 residues long: CTP synthase (569 aa).

Residues 313 to 569 (RIAMVGKYTG…NASLERLKKM (257 aa)) form the Glutamine amidotransferase type-1 domain. Catalysis depends on C410, which acts as the Nucleophile. Catalysis depends on residues H541 and E543.

The protein belongs to the CTP synthase family.

It catalyses the reaction UTP + L-glutamine + ATP + H2O = CTP + L-glutamate + ADP + phosphate + 2 H(+). It functions in the pathway pyrimidine metabolism; CTP biosynthesis via de novo pathway; CTP from UDP: step 2/2. Catalyzes the ATP-dependent amination of UTP to CTP with either L-glutamine or ammonia as the source of nitrogen. This chain is CTP synthase (ctps), found in Dictyostelium discoideum (Social amoeba).